A 491-amino-acid chain; its full sequence is ADP-specific phosphofructokinase (491 aa).

In terms of domain architecture, ADPK spans Glu-4–Gln-486. Residues Glu-281, Glu-312, and Asp-470 each coordinate Mg(2+). The active-site Proton acceptor is the Asp-470.

Belongs to the carbohydrate kinase PfkC family. It depends on Mg(2+) as a cofactor.

The protein localises to the cytoplasm. The enzyme catalyses beta-D-fructose 6-phosphate + ADP = beta-D-fructose 1,6-bisphosphate + AMP + H(+). It participates in carbohydrate degradation; glycolysis. Catalyzes the phosphorylation of fructose 6-phosphate to fructose 1,6-bisphosphate using ADP as the phosphate donor. This is ADP-specific phosphofructokinase from Methanosarcina acetivorans (strain ATCC 35395 / DSM 2834 / JCM 12185 / C2A).